The chain runs to 331 residues: Protein PER1 homolog (331 aa).

Residues 1-24 (MRVLRNFTIFFLFTALSLFRQISA) form the signal peptide. The Lumenal portion of the chain corresponds to 25-100 (SAGDLHPVYV…QYHGKWYFIR (76 aa)). Residues 101–121 (VFGIQELFSVFFSMLNFMIHY) traverse the membrane as a helical segment. Residues 122 to 139 (NGYHIMRRCIPDEHPAKR) are Cytoplasmic-facing. The helical transmembrane segment at 140-160 (LCLSWAIVGMNAWVWSSVFHI) threads the bilayer. The Lumenal portion of the chain corresponds to 161–168 (RDTPITEK). The helical transmembrane segment at 169 to 189 (LDYFSAGAFVLFGSYCTLILM) threads the bilayer. Residues 190 to 199 (LRLDQLPGGK) lie on the Cytoplasmic side of the membrane. A helical transmembrane segment spans residues 200-220 (LLCWIIGVIFIAAFIAHVSYL). Over 221 to 232 (SFYSFDYGYNMK) the chain is Lumenal. A helical membrane pass occupies residues 233–250 (ANVAVGLVQNILWYYYSW). Residues 251 to 263 (SNRNSGLYWTRWP) are Cytoplasmic-facing. The helical transmembrane segment at 264-284 (AYIVTSLMLATSLELFDFSPI) threads the bilayer. Topologically, residues 285 to 289 (ANLID) are lumenal. The helical transmembrane segment at 290–310 (AHALWHLSTVPITHYLYGFVV) threads the bilayer. Residues 311 to 331 (RKCSYDLTKGTFKIKAYDSSR) are Cytoplasmic-facing.

This sequence belongs to the PGAP3/PER1 family.

It is found in the endoplasmic reticulum membrane. Its subcellular location is the vacuole membrane. Involved in the lipid remodeling steps of GPI-anchor maturation. Lipid remodeling steps consist in the generation of 2 saturated fatty chains at the sn-2 position of GPI-anchors proteins. Required for phospholipase A2 activity that removes an acyl-chain at the sn-2 position of GPI-anchors during the remodeling of GPI. Required for efficient transport of GPI-anchor proteins. In Schizosaccharomyces pombe (strain 972 / ATCC 24843) (Fission yeast), this protein is Protein PER1 homolog.